The primary structure comprises 321 residues: Ribose-phosphate pyrophosphokinase 1 (321 aa).

Positions 131, 133, 142, and 146 each coordinate Mg(2+).

Belongs to the ribose-phosphate pyrophosphokinase family.

It carries out the reaction D-ribose 5-phosphate + ATP = 5-phospho-alpha-D-ribose 1-diphosphate + AMP + H(+). The protein is Ribose-phosphate pyrophosphokinase 1 (PRS1) of Candida albicans (Yeast).